The following is a 546-amino-acid chain: Nuclear pore complex protein Nup58 (546 aa).

A run of 17 repeats spans residues 22–23, 36–37, 45–46, 64–65, 73–74, 82–83, 92–93, 101–102, 110–111, 119–120, 128–129, 137–138, 146–147, 155–156, 166–167, 197–198, and 199–200. The segment at 22-200 is 17 X 2 AA repeats of F-G; that stretch reads FGARPATTTA…TTAPPAFGFG (179 aa).

This sequence belongs to the NUP58 family. In terms of assembly, component of the nuclear pore complex. Interacts with Nup54. Interacts (via C-terminus) with fs(1)Yb; this interaction occurs in a RNA-independent manner. Interacts with sbr/nxf1. Interacts with Nxt1. Post-translationally, O-glycosylated; contains O-GlcNAc. O-GlcNAcylation increases with increasing ambient temperature.

It is found in the nucleus. The protein localises to the nuclear pore complex. Its function is as follows. Component of the nuclear pore complex, a complex required for the trafficking across the nuclear membrane. Together with Nup54, required for transposable element silencing regulation in ovarian follicle cells. By interacting with the nuclear (Nxf1/Nxt1) and cytosolic (fs(1)Yb) components of the flamenco (flam) transcripts processing pathway, enables export and subsequent piRNA production. The sequence is that of Nuclear pore complex protein Nup58 from Drosophila melanogaster (Fruit fly).